The sequence spans 626 residues: Membrane protein insertase YidC (626 aa).

5 consecutive transmembrane segments (helical) span residues 8-28, 399-419, 469-489, 527-547, and 563-583; these read LILA…LFPP, MGLA…PLAY, LPIL…FVTL, SIMA…SMWL, and IFAW…SGLL.

Belongs to the OXA1/ALB3/YidC family. Type 1 subfamily. As to quaternary structure, interacts with the Sec translocase complex via SecD. Specifically interacts with transmembrane segments of nascent integral membrane proteins during membrane integration.

Its subcellular location is the cell inner membrane. In terms of biological role, required for the insertion and/or proper folding and/or complex formation of integral membrane proteins into the membrane. Involved in integration of membrane proteins that insert both dependently and independently of the Sec translocase complex, as well as at least some lipoproteins. Aids folding of multispanning membrane proteins. The protein is Membrane protein insertase YidC of Jannaschia sp. (strain CCS1).